A 102-amino-acid chain; its full sequence is Major basic nuclear protein 2 (102 aa).

The span at 1-11 (MKAMKATKKAM) shows a compositional bias: basic residues. The disordered stretch occupies residues 1-43 (MKAMKATKKAMTKTGLAEALAPKPSSARRIAPPSSRAWPPSAQ). The span at 21–42 (APKPSSARRIAPPSSRAWPPSA) shows a compositional bias: low complexity.

It localises to the nucleus. This chain is Major basic nuclear protein 2 (HCc2), found in Crypthecodinium cohnii (Dinoflagellate).